A 260-amino-acid chain; its full sequence is Thrombin-like enzyme 1 (260 aa).

Residues 1-18 (MVLITVLANLLILQLSYA) form the signal peptide. A propeptide spanning residues 19 to 24 (QKSSEL) is cleaved from the precursor. The Peptidase S1 domain occupies 25-251 (VIGGDECNIN…HLDWIQSIIA (227 aa)). 6 disulfide bridges follow: Cys31–Cys165, Cys52–Cys68, Cys102–Cys258, Cys144–Cys212, Cys176–Cys191, and Cys202–Cys227. Catalysis depends on His67, which acts as the Charge relay system. Asn105 is a glycosylation site (N-linked (GlcNAc...) asparagine). Asp112 functions as the Charge relay system in the catalytic mechanism. Residues Asn156 and Asn172 are each glycosylated (N-linked (GlcNAc...) asparagine). Catalysis depends on Ser206, which acts as the Charge relay system. Asn253 carries an N-linked (GlcNAc...) asparagine glycan.

This sequence belongs to the peptidase S1 family. Snake venom subfamily. Monomer. In terms of tissue distribution, expressed by the venom gland.

The protein localises to the secreted. Thrombin-like snake venom serine protease. This is Thrombin-like enzyme 1 from Trimeresurus albolabris (White-lipped pit viper).